Here is a 290-residue protein sequence, read N- to C-terminus: tRNA pseudouridine synthase A (290 aa).

Residue D56 is the Nucleophile of the active site. Residue Y109 participates in substrate binding.

Belongs to the tRNA pseudouridine synthase TruA family.

The enzyme catalyses uridine(38/39/40) in tRNA = pseudouridine(38/39/40) in tRNA. Its function is as follows. Formation of pseudouridine at positions 38, 39 and 40 in the anticodon stem and loop of transfer RNAs. This Methanobrevibacter smithii (strain ATCC 35061 / DSM 861 / OCM 144 / PS) protein is tRNA pseudouridine synthase A.